We begin with the raw amino-acid sequence, 143 residues long: ATP synthase F(0) complex subunit C2, mitochondrial (143 aa).

A mitochondrion-targeting transit peptide spans methionine 1 to arginine 68. The chain crosses the membrane as a helical span at residues valine 84–tyrosine 104. Lysine 111 carries the post-translational modification N6,N6,N6-trimethyllysine. The helical transmembrane segment at isoleucine 119 to isoleucine 139 threads the bilayer.

Belongs to the ATPase C chain family. In terms of assembly, F-type ATPases have 2 components, CF(1) - the catalytic core - and CF(0) - the membrane proton channel. CF(1) has five subunits: alpha(3), beta(3), gamma(1), delta(1), epsilon(1). CF(0) has three main subunits: a, b and c. Interacts with DNAJC30; interaction is direct. Trimethylated by ATPSCKMT at Lys-111. Methylation is required for proper incorporation of the C subunit into the ATP synthase complex and mitochondrial respiration.

It is found in the mitochondrion membrane. Mitochondrial membrane ATP synthase (F(1)F(0) ATP synthase or Complex V) produces ATP from ADP in the presence of a proton gradient across the membrane which is generated by electron transport complexes of the respiratory chain. F-type ATPases consist of two structural domains, F(1) - containing the extramembraneous catalytic core and F(0) - containing the membrane proton channel, linked together by a central stalk and a peripheral stalk. During catalysis, ATP synthesis in the catalytic domain of F(1) is coupled via a rotary mechanism of the central stalk subunits to proton translocation. Part of the complex F(0) domain. A homomeric c-ring of probably 10 subunits is part of the complex rotary element. The sequence is that of ATP synthase F(0) complex subunit C2, mitochondrial from Bos taurus (Bovine).